We begin with the raw amino-acid sequence, 163 residues long: Protein-export protein SecB (163 aa).

The protein belongs to the SecB family. In terms of assembly, homotetramer, a dimer of dimers. One homotetramer interacts with 1 SecA dimer.

It localises to the cytoplasm. One of the proteins required for the normal export of preproteins out of the cell cytoplasm. It is a molecular chaperone that binds to a subset of precursor proteins, maintaining them in a translocation-competent state. It also specifically binds to its receptor SecA. This Azotobacter vinelandii (strain DJ / ATCC BAA-1303) protein is Protein-export protein SecB.